The chain runs to 255 residues: 14-3-3-like protein B (255 aa).

The protein belongs to the 14-3-3 family.

The chain is 14-3-3-like protein B from Nicotiana tabacum (Common tobacco).